A 189-amino-acid polypeptide reads, in one-letter code: Leucine repeat adapter protein 25 (189 aa).

Position 28 is a phosphoserine (Ser-28). A disordered region spans residues 54–82 (ELSRAARAPDGPRHAAGSANSGSAAGPRR). Residues 68 to 79 (AAGSANSGSAAG) are compositionally biased toward low complexity. The stretch at 86–114 (LDSALAALRKEMVGLRQLDMSLLCQLWGL) is one LRR repeat. The disordered stretch occupies residues 136 to 175 (SSLHSDSSYPPDAGLSDDEEPPDASLPPDPPPLTVPQTHN). Residues 159–169 (ASLPPDPPPLT) are compositionally biased toward pro residues. Ser-188 is modified (phosphoserine).

The protein belongs to the FAM89 family. In terms of assembly, interacts with SKI. Interacts (via LRR repeat) with CDC42BPA (via AGC-kinase C-terminal domain), CDC42BPB (via AGC-kinase C-terminal domain) and LIMK1 (via LIM zinc-binding domains). Forms a tripartite complex with CDC42BPA, CDC42BPB and LIMK1. (Microbial infection) Interacts with mouse mammary tumor virus (MMTV) envelope glycoprotein gp70. In terms of tissue distribution, widely expressed. Expressed in the early postnatal brain.

The protein localises to the cytoplasm. Its subcellular location is the cell projection. It is found in the lamellipodium. The protein resides in the cell surface. In terms of biological role, negatively regulates TGF-beta-induced signaling; in cooperation with SKI prevents the translocation of SMAD2 from the nucleus to the cytoplasm in response to TGF-beta. Acts as an adapter that mediates the specific recognition of LIMK1 by CDC42BPA and CDC42BPB in the lamellipodia. LRAP25-mediated CDC42BPA/CDC42BPB targeting to LIMK1 and the lamellipodium results in LIMK1 activation and the subsequent phosphorylation of CFL1 which is important for lamellipodial F-actin regulation. Functionally, (Microbial infection) May be a receptor for mouse mammary tumor virus (MMTV). In Mus musculus (Mouse), this protein is Leucine repeat adapter protein 25.